A 576-amino-acid polypeptide reads, in one-letter code: 9-cis-epoxycarotenoid dioxygenase NCED2, chloroplastic (576 aa).

A chloroplast-targeting transit peptide spans 1–34; the sequence is MEVPIAAMTFAHPANVMTLASRQPKSKRSHISPA. Fe cation contacts are provided by histidine 270, histidine 319, histidine 385, and histidine 563.

This sequence belongs to the carotenoid oxygenase family. Fe(2+) serves as cofactor.

The protein localises to the plastid. The protein resides in the chloroplast. The enzyme catalyses a 9-cis-epoxycarotenoid + O2 = a 12'-apo-carotenal + 2-cis,4-trans-xanthoxin. It carries out the reaction 9-cis-violaxanthin + O2 = (3S,5R,6S)-5,6-epoxy-3-hydroxy-5,6-dihydro-12'-apo-beta-caroten-12'-al + 2-cis,4-trans-xanthoxin. The catalysed reaction is 9'-cis-neoxanthin + O2 = (3S,5R,6R)-3,5-dihydroxy-6,7-didehydro-5,6-dihydro-12'-apo-beta-caroten-12'-al + 2-cis,4-trans-xanthoxin. Its function is as follows. Has a 11,12(11',12') 9-cis epoxycarotenoid cleavage activity. Catalyzes the first step of abscisic-acid biosynthesis from carotenoids. The protein is 9-cis-epoxycarotenoid dioxygenase NCED2, chloroplastic of Oryza sativa subsp. japonica (Rice).